The following is a 366-amino-acid chain: Aminomethyltransferase (366 aa).

Belongs to the GcvT family. In terms of assembly, the glycine cleavage system is composed of four proteins: P, T, L and H.

The catalysed reaction is N(6)-[(R)-S(8)-aminomethyldihydrolipoyl]-L-lysyl-[protein] + (6S)-5,6,7,8-tetrahydrofolate = N(6)-[(R)-dihydrolipoyl]-L-lysyl-[protein] + (6R)-5,10-methylene-5,6,7,8-tetrahydrofolate + NH4(+). The glycine cleavage system catalyzes the degradation of glycine. The sequence is that of Aminomethyltransferase from Bacillus mycoides (strain KBAB4) (Bacillus weihenstephanensis).